Consider the following 444-residue polypeptide: E1B 55 kDa protein (444 aa).

Residues 1–42 (MEQDSDLESGRATNQRPPRVRVRGAGVRGRGRVRRRALSEGQ) are disordered. Residues Ser438 and Ser439 each carry the phosphoserine modification.

It belongs to the adenoviridae E1B 55 kDa protein family. Interacts with host PML-4 and PML-5; this interaction promotes efficient subnuclear targeting of E1B-55K to PML nuclear bodies. Interacts with E4-ORF3 protein. Interacts with E4-ORF6 protein.

The protein resides in the host nucleus. It localises to the host cytoplasm. Functionally, plays a major role to prevent cellular inhibition of viral genome replication. Assembles an SCF-like E3 ubiquitin ligase complex based on the cellular proteins ELOB, ELOC, CUL5 and RBX1, in cooperation with viral E4orf6. This viral RING-type ligase ubiquitinates cellular substrates and targets them to proteasomal degradation: TP53/p53, LIG4, MRE11-RAD50-NBS1 (MRN) complex, ITGA3, DAXX and BLM. E1B-55K probably acts as the substrate-specific adapter of the SCF-like E3 ubiquitin ligase complex. Degradation of host TP53/p53 activity is essential for preventing E1A-induced TP53 accumulation that would otherwise lead to cell apoptosis and growth arrest. E1B-55K also inactivates TP53 transcription-factor activity by binding its transactivation domain. E1B-55K also functions as a SUMO1 E3 ligase for TP53 which causes the latter to be sequestered in promyelocytic leukemia (PML) nuclear bodies thereby contributing to maximal inhibition of TP53 function. This Canis lupus familiaris (Dog) protein is E1B 55 kDa protein.